A 317-amino-acid chain; its full sequence is Acetyl-coenzyme A carboxylase carboxyl transferase subunit alpha (317 aa).

The 251-residue stretch at 43–293 (RVRESMADIY…GDVISNALGE (251 aa)) folds into the CoA carboxyltransferase C-terminal domain.

The protein belongs to the AccA family. In terms of assembly, acetyl-CoA carboxylase is a heterohexamer composed of biotin carboxyl carrier protein (AccB), biotin carboxylase (AccC) and two subunits each of ACCase subunit alpha (AccA) and ACCase subunit beta (AccD).

It localises to the cytoplasm. It catalyses the reaction N(6)-carboxybiotinyl-L-lysyl-[protein] + acetyl-CoA = N(6)-biotinyl-L-lysyl-[protein] + malonyl-CoA. The protein operates within lipid metabolism; malonyl-CoA biosynthesis; malonyl-CoA from acetyl-CoA: step 1/1. Its function is as follows. Component of the acetyl coenzyme A carboxylase (ACC) complex. First, biotin carboxylase catalyzes the carboxylation of biotin on its carrier protein (BCCP) and then the CO(2) group is transferred by the carboxyltransferase to acetyl-CoA to form malonyl-CoA. This is Acetyl-coenzyme A carboxylase carboxyl transferase subunit alpha from Rhizobium rhizogenes (strain K84 / ATCC BAA-868) (Agrobacterium radiobacter).